A 315-amino-acid polypeptide reads, in one-letter code: Non-structural protein 3 (315 aa).

The interval 1 to 149 is RNA-binding; sequence MLKMESTQQM…TKLMRDKLER (149 aa). Residues 150-206 form a dimerization region; sequence GEVEVDDSFVDEKMEVDTIDWKSRYEQLEQRFESLKSRVNEKYNNWVLKARKMNENM. Positions 166-237 form a coiled coil; that stretch reads DTIDWKSRYE…NKLERDLQNK (72 aa). The segment at 170-234 is interaction with host ZC3H7B; that stretch reads WKSRYEQLEQ…VYNNKLERDL (65 aa). Residues 208-315 form an interaction with host EIF4G1 region; it reads SLQNVIPQQQ…CNYQYSFGCE (108 aa).

This sequence belongs to the rotavirus NSP3 family. Homodimer. Interacts (via the coiled-coil region) with host ZC3H7B (via LD motif). Interacts with host EIF4G1.

Its subcellular location is the host cytoplasm. In terms of biological role, plays an important role in stimulating the translation of viral mRNAs. These mRNAs are capped but not polyadenylated, instead terminating in a conserved sequence 'GACC' at the 3' that is recognized by NSP3, which competes with host PABPC1 for EIF4G1 binding. The interaction between NSP3 and host EIF4G1 stabilizes the EIF4E-EIF4G1 interaction, thereby facilitating the initiation of capped mRNA translation. The protein is Non-structural protein 3 of Macaca mulatta (Rhesus macaque).